A 227-amino-acid chain; its full sequence is Ribonuclease 3 (227 aa).

The region spanning 4 to 133 (FEKLETLLGY…LIAAIYLDSN (130 aa)) is the RNase III domain. Glutamate 46 serves as a coordination point for Mg(2+). The active site involves aspartate 50. Residues asparagine 119 and glutamate 122 each coordinate Mg(2+). Residue glutamate 122 is part of the active site. One can recognise a DRBM domain in the interval 158 to 226 (DPKTALQEWA…ARCLLHRLKN (69 aa)).

Belongs to the ribonuclease III family. In terms of assembly, homodimer. It depends on Mg(2+) as a cofactor.

It localises to the cytoplasm. The catalysed reaction is Endonucleolytic cleavage to 5'-phosphomonoester.. Functionally, digests double-stranded RNA. Involved in the processing of primary rRNA transcript to yield the immediate precursors to the large and small rRNAs (23S and 16S). Processes some mRNAs, and tRNAs when they are encoded in the rRNA operon. Processes pre-crRNA and tracrRNA of type II CRISPR loci if present in the organism. The protein is Ribonuclease 3 of Rickettsia typhi (strain ATCC VR-144 / Wilmington).